We begin with the raw amino-acid sequence, 657 residues long: Acetyl-coenzyme A synthetase (657 aa).

Residues 192 to 195 (RRGK) and T311 each bind CoA. ATP contacts are provided by residues 387–389 (GEP), 411–416 (DTWWQT), D504, R519, and R530. Residues H543 and V546 each coordinate Mg(2+). CoA is bound at residue R592. An N6-acetyllysine modification is found at K617.

The protein belongs to the ATP-dependent AMP-binding enzyme family. Mg(2+) serves as cofactor. In terms of processing, acetylated. Deacetylation by the SIR2-homolog deacetylase activates the enzyme.

It carries out the reaction acetate + ATP + CoA = acetyl-CoA + AMP + diphosphate. In terms of biological role, catalyzes the conversion of acetate into acetyl-CoA (AcCoA), an essential intermediate at the junction of anabolic and catabolic pathways. AcsA undergoes a two-step reaction. In the first half reaction, AcsA combines acetate with ATP to form acetyl-adenylate (AcAMP) intermediate. In the second half reaction, it can then transfer the acetyl group from AcAMP to the sulfhydryl group of CoA, forming the product AcCoA. This Campylobacter jejuni subsp. jejuni serotype O:6 (strain 81116 / NCTC 11828) protein is Acetyl-coenzyme A synthetase.